A 575-amino-acid chain; its full sequence is Lysine--tRNA ligase (575 aa).

Positions 412 and 419 each coordinate Mg(2+).

Belongs to the class-II aminoacyl-tRNA synthetase family. As to quaternary structure, homodimer. It depends on Mg(2+) as a cofactor.

The protein localises to the cytoplasm. It carries out the reaction tRNA(Lys) + L-lysine + ATP = L-lysyl-tRNA(Lys) + AMP + diphosphate. This Bacteroides fragilis (strain YCH46) protein is Lysine--tRNA ligase.